We begin with the raw amino-acid sequence, 100 residues long: NADH-quinone oxidoreductase subunit K (100 aa).

Transmembrane regions (helical) follow at residues 4-24 (LSHG…GMII), 28-48 (LLFM…AFVV), and 60-80 (VMYI…LALL).

Belongs to the complex I subunit 4L family. In terms of assembly, NDH-1 is composed of 13 different subunits. Subunits NuoA, H, J, K, L, M, N constitute the membrane sector of the complex.

The protein resides in the cell inner membrane. It carries out the reaction a quinone + NADH + 5 H(+)(in) = a quinol + NAD(+) + 4 H(+)(out). Functionally, NDH-1 shuttles electrons from NADH, via FMN and iron-sulfur (Fe-S) centers, to quinones in the respiratory chain. The immediate electron acceptor for the enzyme in this species is believed to be ubiquinone. Couples the redox reaction to proton translocation (for every two electrons transferred, four hydrogen ions are translocated across the cytoplasmic membrane), and thus conserves the redox energy in a proton gradient. The chain is NADH-quinone oxidoreductase subunit K from Sodalis glossinidius (strain morsitans).